Consider the following 379-residue polypeptide: Early boundary activity protein 3 (379 aa).

In terms of assembly, the heterotrimeric Elba complex consists of Elba1, Elba2 and Elba3.

The protein localises to the nucleus. Functionally, the heterotrimeric Elba complex is required for chromatin domain boundary function during early embryogenesis. It binds to a 8-bp sequence 5'-CCAATAAG-3' in the Fab-7 insulator or boundary element in the bithorax complex and contributes to its insulator or boundary activity. Elba3 lacks DNA-binding activity and plays the role of an adapter protein, bringing Elba1 and 2 together, thereby establishing a complex that recognizes the asymmetric sequence motif through the BEN domains of Elba1 and 2. This Drosophila melanogaster (Fruit fly) protein is Early boundary activity protein 3.